Here is a 272-residue protein sequence, read N- to C-terminus: HMP-PP phosphatase (272 aa).

The active-site Nucleophile is Asp8. Asp8, Asp10, and Asp212 together coordinate Mg(2+).

This sequence belongs to the HAD-like hydrolase superfamily. Cof family. It depends on Mg(2+) as a cofactor.

The enzyme catalyses 4-amino-2-methyl-5-(diphosphooxymethyl)pyrimidine + H2O = 4-amino-2-methyl-5-(phosphooxymethyl)pyrimidine + phosphate + H(+). In terms of biological role, catalyzes the hydrolysis of 4-amino-2-methyl-5-hydroxymethylpyrimidine pyrophosphate (HMP-PP) to 4-amino-2-methyl-5-hydroxymethylpyrimidine phosphate (HMP-P). The chain is HMP-PP phosphatase from Escherichia coli (strain 55989 / EAEC).